The following is a 673-amino-acid chain: MEIEQRRIMKREGEEEEDNNQLSLQEEEPDTEEEMSGRTIEPWTKQITVRGVFVSIVIGVVFSVIAQKLNLTTGIVPNLNSSAALLAFVFVQTWTKILKKSGFVAKPFTRQENTMIQTSAVACYGIAVGGGFASYLLGLNHKTYVLSGVNLEGNSPKSVKEPGLGWMTAYLFVVCFIGLFVLIPLRKVMIVDLKLTYPSGLATAVLINGFHTQGDAQAKKQVRGFMKYFSFSFLWGFFQWFFSGIEDCGFAQFPTFGLKAWKQTFFFDFSMTFVGAGMICSHLVNLSLLLGAILSYGLMWPLLDKLKGSWFPDNLDEHNMKSIYGYKVFLSVALILGDGLYTFVKILFVTIANVNARLKNKPNDLDDVGHKKQRKDLKEDENFLRDKIPMWFAVSGYLTFAAVSTVVVPLIFPQLKWYYVIVAYIFAPSLAFCNAYGAGLTDINMAYNYGKIGLFVIAAVTGRENGVVAGLAGCGLIKSVVSVSCILMQDFKTAHYTMTSPKAMFASQMIGTVVGCIVTPLSFFLFYKAFDIGNPNGEFKAPYALIYRNMAILGVQGFSALPLHCLQMCYGFFGFAVLVNVVRDLTPAKIGRFMPLPTAMAVPFLVGAYFAIDMCVGTLIVFVWEKMNRKKAEFMVPAVASGLICGEGLWTLPAAVLALAGVKPPICMKFLAS.

Residues 1 to 13 (MEIEQRRIMKREG) are compositionally biased toward basic and acidic residues. A disordered region spans residues 1–39 (MEIEQRRIMKREGEEEEDNNQLSLQEEEPDTEEEMSGRT). Positions 14–34 (EEEEDNNQLSLQEEEPDTEEE) are enriched in acidic residues. 16 helical membrane passes run 46-66 (QITVRGVFVSIVIGVVFSVIA), 71-91 (LTTGIVPNLNSSAALLAFVFV), 119-139 (SAVACYGIAVGGGFASYLLGL), 163-183 (GLGWMTAYLFVVCFIGLFVLI), 225-245 (FMKYFSFSFLWGFFQWFFSGI), 260-280 (AWKQTFFFDFSMTFVGAGMIC), 283-303 (LVNLSLLLGAILSYGLMWPLL), 328-348 (VFLSVALILGDGLYTFVKILF), 392-412 (FAVSGYLTFAAVSTVVVPLIF), 420-440 (VIVAYIFAPSLAFCNAYGAGL), 442-462 (DINMAYNYGKIGLFVIAAVTG), 467-487 (VVAGLAGCGLIKSVVSVSCIL), 510-530 (IGTVVGCIVTPLSFFLFYKAF), 558-578 (FSALPLHCLQMCYGFFGFAVL), 604-624 (FLVGAYFAIDMCVGTLIVFVW), and 642-662 (GLICGEGLWTLPAAVLALAGV).

It belongs to the YSL (TC 2.A.67.2) family. Low levels of expression in leaves and shoots, but not detected in roots. Restricted to the vasculature, in the xylem parenchyma surrounding xylem tubes. Expressed in pollen grains, in the vasculature of petals and sepals, in the carpel veins, in the style underneath the stigmatic papillae, in the vascular tissue of the funiculus and in the chalazal endosperm.

Its subcellular location is the membrane. Its function is as follows. Involved in iron loading of the seeds. Acts probably as a transporter of iron- and metal-nicotianamine chelates. This chain is Metal-nicotianamine transporter YSL1 (YSL1), found in Arabidopsis thaliana (Mouse-ear cress).